A 209-amino-acid chain; its full sequence is Large ribosomal subunit protein bL25 (209 aa).

Residues 190 to 209 (GLKSADDEAEGEDAEEAAAE) are disordered. Acidic residues predominate over residues 196–209 (DEAEGEDAEEAAAE).

It belongs to the bacterial ribosomal protein bL25 family. CTC subfamily. In terms of assembly, part of the 50S ribosomal subunit; part of the 5S rRNA/L5/L18/L25 subcomplex. Contacts the 5S rRNA. Binds to the 5S rRNA independently of L5 and L18.

Its function is as follows. This is one of the proteins that binds to the 5S RNA in the ribosome where it forms part of the central protuberance. The chain is Large ribosomal subunit protein bL25 from Ruegeria sp. (strain TM1040) (Silicibacter sp.).